The primary structure comprises 562 residues: Protein wntless (562 aa).

The Cytoplasmic portion of the chain corresponds to 1-13 (MSGTILENLSGRK). Residues 14–34 (LSILVTTLLLCQVLCFLLGGL) traverse the membrane as a helical segment. Topologically, residues 35–239 (YAPLPAGHVT…AIHQNGGFTQ (205 aa)) are lumenal. A glycan (N-linked (GlcNAc...) asparagine) is linked at asparagine 58. The chain crosses the membrane as a helical span at residues 240 to 260 (IWLLLKTVLFPFVVGIMIWFW). Topologically, residues 261 to 270 (RRVHLLQRSP) are cytoplasmic. The helical transmembrane segment at 271–291 (ALLEYMLIYLGAALTFLNLPL) threads the bilayer. The Lumenal segment spans residues 292–311 (EYLSLVFEMPYMLLLSDIRQ). The helical transmembrane segment at 312–332 (GIFYAMLLTFWLVFAGEHMLI) threads the bilayer. At 333-344 (QDAPNKSTIRSR) the chain is on the cytoplasmic side. A helical membrane pass occupies residues 345–365 (YWKHLSAVVVGCISLFVFDIC). Residues 366–390 (ERGVQLRNPFYSIWAMPLAAKMAMT) are Lumenal-facing. The helical transmembrane segment at 391–411 (FIVLAGVSAAIYFLFLCYMIW) threads the bilayer. Residues 412 to 441 (KVFRNIGDKRTSLPSMSQARRLHYESLIYR) are Cytoplasmic-facing. The chain crosses the membrane as a helical span at residues 442–462 (FKFLMLATIVCAALTVTGFIM). Residues 463–482 (GQRAEGQWDWNDNVAIQPTS) are Lumenal-facing. The helical transmembrane segment at 483 to 503 (AFLTGVYGMWNIYIFALLILY) threads the bilayer. Over 504–562 (APSHKQWPTMHHSDETTQSNENIVASAASEEIEFSHLPSDSNPSEISSLTSFTRKVAFD) the chain is Cytoplasmic. The disordered stretch occupies residues 539–562 (HLPSDSNPSEISSLTSFTRKVAFD). Positions 541–556 (PSDSNPSEISSLTSFT) are enriched in polar residues.

It belongs to the wntless family. In terms of assembly, interacts with wg; in the Golgi. Interacts with Vps35, a component of the retromer complex; wls stability is regulated by Vps35.

Its subcellular location is the presynaptic cell membrane. It is found in the postsynaptic cell membrane. The protein localises to the cell membrane. The protein resides in the endoplasmic reticulum membrane. It localises to the endosome membrane. Its subcellular location is the golgi apparatus membrane. Its function is as follows. A segment polarity gene required for wingless (wg)-dependent patterning processes, acting in both wg-sending cells and wg-target cells. In non-neuronal cells wls directs wg secretion. The wls traffic loop encompasses the Golgi, the cell surface, an endocytic compartment and a retrograde route leading back to the Golgi, and involves clathrin-mediated endocytosis and the retromer complex (a conserved protein complex consisting of Vps35 and Vps26). In neuronal cells (the larval motorneuron NMJ), the wg signal moves across the synapse via the release of wls-containing exosome-like vesicles. Postsynaptic wls is required for the trafficking of fz2 through the fz2-interacting protein Grip. This Drosophila erecta (Fruit fly) protein is Protein wntless.